A 499-amino-acid polypeptide reads, in one-letter code: Probable cytosol aminopeptidase (499 aa).

The Mn(2+) site is built by Lys-268 and Asp-273. Residue Lys-280 is part of the active site. Mn(2+)-binding residues include Asp-291, Asp-350, and Glu-352. The active site involves Arg-354.

The protein belongs to the peptidase M17 family. It depends on Mn(2+) as a cofactor.

The protein resides in the cytoplasm. It carries out the reaction Release of an N-terminal amino acid, Xaa-|-Yaa-, in which Xaa is preferably Leu, but may be other amino acids including Pro although not Arg or Lys, and Yaa may be Pro. Amino acid amides and methyl esters are also readily hydrolyzed, but rates on arylamides are exceedingly low.. The enzyme catalyses Release of an N-terminal amino acid, preferentially leucine, but not glutamic or aspartic acids.. Presumably involved in the processing and regular turnover of intracellular proteins. Catalyzes the removal of unsubstituted N-terminal amino acids from various peptides. The polypeptide is Probable cytosol aminopeptidase (Halorhodospira halophila (strain DSM 244 / SL1) (Ectothiorhodospira halophila (strain DSM 244 / SL1))).